Reading from the N-terminus, the 373-residue chain is UDP-N-acetylglucosamine--N-acetylmuramyl-(pentapeptide) pyrophosphoryl-undecaprenol N-acetylglucosamine transferase (373 aa).

Residues 10–12 (TGG), N124, R166, S196, and Q301 each bind UDP-N-acetyl-alpha-D-glucosamine.

The protein belongs to the glycosyltransferase 28 family. MurG subfamily.

Its subcellular location is the cell membrane. It carries out the reaction di-trans,octa-cis-undecaprenyl diphospho-N-acetyl-alpha-D-muramoyl-L-alanyl-D-glutamyl-meso-2,6-diaminopimeloyl-D-alanyl-D-alanine + UDP-N-acetyl-alpha-D-glucosamine = di-trans,octa-cis-undecaprenyl diphospho-[N-acetyl-alpha-D-glucosaminyl-(1-&gt;4)]-N-acetyl-alpha-D-muramoyl-L-alanyl-D-glutamyl-meso-2,6-diaminopimeloyl-D-alanyl-D-alanine + UDP + H(+). The protein operates within cell wall biogenesis; peptidoglycan biosynthesis. Its function is as follows. Cell wall formation. Catalyzes the transfer of a GlcNAc subunit on undecaprenyl-pyrophosphoryl-MurNAc-pentapeptide (lipid intermediate I) to form undecaprenyl-pyrophosphoryl-MurNAc-(pentapeptide)GlcNAc (lipid intermediate II). The protein is UDP-N-acetylglucosamine--N-acetylmuramyl-(pentapeptide) pyrophosphoryl-undecaprenol N-acetylglucosamine transferase of Desulforudis audaxviator (strain MP104C).